The following is a 165-amino-acid chain: Coronafacic acid dehydratase (165 aa).

His62 is an active-site residue.

Belongs to the thioester dehydratase family.

Its pathway is phytotoxin biosynthesis; coronatine biosynthesis. The chain is Coronafacic acid dehydratase (cfa2) from Pseudomonas savastanoi pv. glycinea (Pseudomonas syringae pv. glycinea).